Here is a 141-residue protein sequence, read N- to C-terminus: Nucleoside diphosphate kinase (141 aa).

Residues lysine 9, phenylalanine 57, arginine 85, threonine 91, arginine 102, and asparagine 112 each contribute to the ATP site. Histidine 115 (pros-phosphohistidine intermediate) is an active-site residue.

Belongs to the NDK family. Homotetramer. Requires Mg(2+) as cofactor.

The protein resides in the cytoplasm. The enzyme catalyses a 2'-deoxyribonucleoside 5'-diphosphate + ATP = a 2'-deoxyribonucleoside 5'-triphosphate + ADP. It catalyses the reaction a ribonucleoside 5'-diphosphate + ATP = a ribonucleoside 5'-triphosphate + ADP. In terms of biological role, major role in the synthesis of nucleoside triphosphates other than ATP. The ATP gamma phosphate is transferred to the NDP beta phosphate via a ping-pong mechanism, using a phosphorylated active-site intermediate. The sequence is that of Nucleoside diphosphate kinase from Chlamydia trachomatis serovar L2 (strain ATCC VR-902B / DSM 19102 / 434/Bu).